The sequence spans 282 residues: NADPH-dependent 7-cyano-7-deazaguanine reductase (282 aa).

88–90 serves as a coordination point for substrate; it reads IES. 90–91 serves as a coordination point for NADPH; sequence SK. The Thioimide intermediate role is filled by C190. The active-site Proton donor is the D197. 229–230 is a binding site for substrate; it reads HE. NADPH is bound at residue 258-259; sequence RG.

It belongs to the GTP cyclohydrolase I family. QueF type 2 subfamily. Homodimer.

It localises to the cytoplasm. The enzyme catalyses 7-aminomethyl-7-carbaguanine + 2 NADP(+) = 7-cyano-7-deazaguanine + 2 NADPH + 3 H(+). The protein operates within tRNA modification; tRNA-queuosine biosynthesis. Functionally, catalyzes the NADPH-dependent reduction of 7-cyano-7-deazaguanine (preQ0) to 7-aminomethyl-7-deazaguanine (preQ1). The sequence is that of NADPH-dependent 7-cyano-7-deazaguanine reductase from Pectobacterium carotovorum subsp. carotovorum (strain PC1).